A 113-amino-acid chain; its full sequence is Cell cycle protein GpsB (113 aa).

Positions 36-68 (LDMVIKDYSTFTQEIEALQAENIRLVQELDNAP) form a coiled coil.

It belongs to the GpsB family. In terms of assembly, forms polymers through the coiled coil domains. Interacts with PBP1, MreC and EzrA.

It localises to the cytoplasm. In terms of biological role, divisome component that associates with the complex late in its assembly, after the Z-ring is formed, and is dependent on DivIC and PBP2B for its recruitment to the divisome. Together with EzrA, is a key component of the system that regulates PBP1 localization during cell cycle progression. Its main role could be the removal of PBP1 from the cell pole after pole maturation is completed. Also contributes to the recruitment of PBP1 to the division complex. Not essential for septum formation. This is Cell cycle protein GpsB from Listeria welshimeri serovar 6b (strain ATCC 35897 / DSM 20650 / CCUG 15529 / CIP 8149 / NCTC 11857 / SLCC 5334 / V8).